Reading from the N-terminus, the 249-residue chain is UPF0696 protein C11orf68 homolog (249 aa).

The protein belongs to the UPF0696 family.

In Danio rerio (Zebrafish), this protein is UPF0696 protein C11orf68 homolog.